A 582-amino-acid polypeptide reads, in one-letter code: Transcription factor PCF5 (582 aa).

Disordered stretches follow at residues 30–78 and 123–195; these read AAGK…QHDH and SPMG…GGGG. Gly residues predominate over residues 51-64; the sequence is GGDGGGVGGGGSGG. One can recognise a TCP domain in the interval 213–271; sequence RKDRHSKVCTARGPRDRRVRLSAHTAIQFYDVQDRLGYDRPSKAVDWLIKNAKDAIDKL. Disordered stretches follow at residues 283-306, 402-423, and 548-582; these read GAGA…ENSD, MFHH…TTQQ, and RLPA…ASHH.

In terms of assembly, forms homodimers and heterodimers with PCF2.

Its subcellular location is the nucleus. Functionally, transcription activator. Binds the promoter core sequence 5'-GGNCC-3'. This chain is Transcription factor PCF5 (PCF5), found in Oryza sativa subsp. indica (Rice).